The sequence spans 177 residues: Large ribosomal subunit protein uL5 (177 aa).

It belongs to the universal ribosomal protein uL5 family. Part of the 50S ribosomal subunit; part of the 5S rRNA/L5/L18/L25 subcomplex. Contacts the 5S rRNA and the P site tRNA. Forms a bridge to the 30S subunit in the 70S ribosome.

Functionally, this is one of the proteins that bind and probably mediate the attachment of the 5S RNA into the large ribosomal subunit, where it forms part of the central protuberance. In the 70S ribosome it contacts protein S13 of the 30S subunit (bridge B1b), connecting the 2 subunits; this bridge is implicated in subunit movement. Contacts the P site tRNA; the 5S rRNA and some of its associated proteins might help stabilize positioning of ribosome-bound tRNAs. The chain is Large ribosomal subunit protein uL5 from Anaplasma phagocytophilum (strain HZ).